Consider the following 456-residue polypeptide: N(6)-adenosine-methyltransferase non-catalytic subunit METTL14 (456 aa).

A compositionally biased stretch (basic and acidic residues) spans 39–51; the sequence is DEQREIAETRETS. Positions 39-74 are disordered; sequence DEQREIAETRETSRASYDTSATVSKRKMPEEGEADE. Residues 52 to 61 are compositionally biased toward polar residues; the sequence is RASYDTSATV. Interaction with METTL3 regions lie at residues 135 to 136 and 237 to 238; these read RD and SG. The tract at residues 245 to 254 is positively charged region required for RNA-binding; that stretch reads RMCLRKWGFR. Interaction with METTL3 regions lie at residues 255-258 and 278-287; these read RSED and KAIFQRTKEH. Residues 297–298 form a positively charged region required for RNA-binding region; it reads HR. Residues 308-312 form an interaction with METTL3 region; sequence NVDID. Residues 395-456 are disordered; the sequence is LRPKTPPPKS…GPHRGVFAPR (62 aa). A compositionally biased stretch (gly residues) spans 410-421; sequence ASRGGGRGGPSA. The span at 423–441 shows a compositional bias: basic and acidic residues; sequence RGERGRERNRGSFRGDRGN.

Belongs to the MT-A70-like family. As to quaternary structure, heterodimer; heterodimerizes with mettl3 to form an antiparallel heterodimer that constitutes an active methyltransferase. Component of the WMM complex, a N6-methyltransferase complex composed of a catalytic subcomplex, named MAC, and of an associated subcomplex, named MACOM. The MAC subcomplex is composed of mettl3 and mettl14.

The protein resides in the nucleus. Functionally, the METTL3-METTL14 heterodimer forms a N6-methyltransferase complex that methylates adenosine residues at the N(6) position of some mRNAs and regulates the circadian clock, differentiation of embryonic stem cells and cortical neurogenesis. In the heterodimer formed with mettl3, mettl14 constitutes the RNA-binding scaffold that recognizes the substrate rather than the catalytic core. N6-methyladenosine (m6A), which takes place at the 5'-[AG]GAC-3' consensus sites of some mRNAs, plays a role in mRNA stability and processing. This Xenopus tropicalis (Western clawed frog) protein is N(6)-adenosine-methyltransferase non-catalytic subunit METTL14 (mettl14).